The sequence spans 389 residues: Probable dual-specificity RNA methyltransferase RlmN (389 aa).

The tract at residues 1 to 23 (MTTQHPDTPETGITPGGTSGAFR) is disordered. Glu127 acts as the Proton acceptor in catalysis. In terms of domain architecture, Radical SAM core spans 133–376 (YPTRTTLCIS…ATLRDTRGQD (244 aa)). Cys140 and Cys381 are oxidised to a cystine. The [4Fe-4S] cluster site is built by Cys147, Cys151, and Cys154. Residues 202-203 (GE), Ser236, 259-261 (SLH), and Asn338 each bind S-adenosyl-L-methionine. Cys381 serves as the catalytic S-methylcysteine intermediate.

Belongs to the radical SAM superfamily. RlmN family. It depends on [4Fe-4S] cluster as a cofactor.

The protein resides in the cytoplasm. The enzyme catalyses adenosine(2503) in 23S rRNA + 2 reduced [2Fe-2S]-[ferredoxin] + 2 S-adenosyl-L-methionine = 2-methyladenosine(2503) in 23S rRNA + 5'-deoxyadenosine + L-methionine + 2 oxidized [2Fe-2S]-[ferredoxin] + S-adenosyl-L-homocysteine. It carries out the reaction adenosine(37) in tRNA + 2 reduced [2Fe-2S]-[ferredoxin] + 2 S-adenosyl-L-methionine = 2-methyladenosine(37) in tRNA + 5'-deoxyadenosine + L-methionine + 2 oxidized [2Fe-2S]-[ferredoxin] + S-adenosyl-L-homocysteine. Its function is as follows. Specifically methylates position 2 of adenine 2503 in 23S rRNA and position 2 of adenine 37 in tRNAs. This Bifidobacterium longum (strain NCC 2705) protein is Probable dual-specificity RNA methyltransferase RlmN.